The chain runs to 186 residues: Ribosome-recycling factor (186 aa).

This sequence belongs to the RRF family.

The protein localises to the cytoplasm. Functionally, responsible for the release of ribosomes from messenger RNA at the termination of protein biosynthesis. May increase the efficiency of translation by recycling ribosomes from one round of translation to another. This is Ribosome-recycling factor from Phocaeicola vulgatus (strain ATCC 8482 / DSM 1447 / JCM 5826 / CCUG 4940 / NBRC 14291 / NCTC 11154) (Bacteroides vulgatus).